The sequence spans 373 residues: Peptidoglycan recognition protein 4 (373 aa).

The N-terminal stretch at 1 to 17 is a signal peptide; sequence MLPWLLVFSALGIQAWG. N22, N39, N109, N145, and N247 each carry an N-linked (GlcNAc...) asparagine glycan. 2 N-acetylmuramoyl-L-alanine amidase domains span residues 74–212 and 235–358; these read TPVN…ACPG and YGII…LSPG. Intrachain disulfides connect C210–C332, C226–C270, and C246–C252. Positions 263 and 274 each coordinate peptidoglycan. 2 interaction with murein regions span residues 293–302 and 353–354; these read QGSSTPGYDD and RT.

It belongs to the N-acetylmuramoyl-L-alanine amidase 2 family. In terms of assembly, homodimer; disulfide-linked. Heterodimer with PGLYRP3; disulfide-linked. In terms of processing, N-glycosylated. In terms of tissue distribution, detected in skin epidermis, eccrine sweat glands and ducts, mucous cells in the submandibular salivary gland, mucous cells in the throat, ciliary body epithelial cells of the eye, small intestine, colon, stomach and in mature epithelial cells of the tongue (at protein level). High expression in skin and esophagus. Expressed also to a much lesser extent in the tonsils and thymus.

The protein localises to the secreted. In terms of biological role, pattern receptor that binds to murein peptidoglycans (PGN) of Gram-positive bacteria. Has bactericidal activity towards Gram-positive bacteria. May kill Gram-positive bacteria by interfering with peptidoglycan biosynthesis. Also binds to Gram-negative bacteria, and has bacteriostatic activity towards Gram-negative bacteria. Plays a role in innate immunity. This is Peptidoglycan recognition protein 4 (PGLYRP4) from Homo sapiens (Human).